Here is a 95-residue protein sequence, read N- to C-terminus: MKYQAKYIRMSPTKVRRVVRLLDGMTYEKASQVVRFLPYRAATCVAKLLKSVNAQATQRVHFYVDQAPTLKRIRARAQSRAYPIKKRCCHITLEI.

It belongs to the universal ribosomal protein uL22 family. In terms of assembly, part of the 50S ribosomal subunit.

It is found in the plastid. It localises to the chloroplast. In terms of biological role, this protein binds specifically to 23S rRNA. Functionally, the globular domain of the protein is located near the polypeptide exit tunnel on the outside of the subunit, while an extended beta-hairpin is found that lines the wall of the exit tunnel in the center of the 70S ribosome. This chain is Large ribosomal subunit protein uL22c (rpl22), found in Cyanidioschyzon merolae (strain NIES-3377 / 10D) (Unicellular red alga).